A 190-amino-acid chain; its full sequence is A-type ATP synthase subunit E (190 aa).

Belongs to the V-ATPase E subunit family. Has multiple subunits with at least A(3), B(3), C, D, E, F, H, I and proteolipid K(x).

The protein resides in the cell membrane. In terms of biological role, component of the A-type ATP synthase that produces ATP from ADP in the presence of a proton gradient across the membrane. The polypeptide is A-type ATP synthase subunit E (Pyrobaculum neutrophilum (strain DSM 2338 / JCM 9278 / NBRC 100436 / V24Sta) (Thermoproteus neutrophilus)).